A 1409-amino-acid chain; its full sequence is L-2-aminoadipate reductase large subunit (1409 aa).

A Carrier domain is found at 858–937 (QALSETEQTL…GFASEIDRLL (80 aa)). An O-(pantetheine 4'-phosphoryl)serine modification is found at S896.

This sequence belongs to the ATP-dependent AMP-binding enzyme family. As to quaternary structure, heterodimer of an alpha and a beta subunit. Pantetheine 4'-phosphate serves as cofactor.

The enzyme catalyses (S)-2-amino-6-oxohexanoate + NADP(+) + H2O = L-2-aminoadipate + NADPH + 2 H(+). It carries out the reaction (S)-2-amino-6-oxohexanoate + NAD(+) + H2O = L-2-aminoadipate + NADH + 2 H(+). It catalyses the reaction (S)-2-amino-6-oxohexanoate + AMP + diphosphate + NADP(+) = L-2-aminoadipate + ATP + NADPH + H(+). The protein operates within amino-acid biosynthesis; L-lysine biosynthesis via AAA pathway; L-lysine from L-alpha-aminoadipate (fungal route): step 1/3. Catalyzes the activation of alpha-aminoadipate by ATP-dependent adenylation and the reduction of activated alpha-aminoadipate by NADPH. The activated alpha-aminoadipate is bound to the phosphopantheinyl group of the enzyme itself before it is reduced to (S)-2-amino-6-oxohexanoate. The protein is L-2-aminoadipate reductase large subunit (lys2) of Penicillium chrysogenum (Penicillium notatum).